We begin with the raw amino-acid sequence, 378 residues long: CST complex subunit STN1 (378 aa).

Positions 8 to 195 (MECESSPREE…KVYDQPFRNP (188 aa)) are interaction with CTC1. Positions 64–165 (VDIMGAVISV…EICANIYYKV (102 aa)) form a DNA-binding region, OB. Winged helix-turn-helix (wHTH) stretches follow at residues 201 to 305 (EALN…YVTT) and 306 to 378 (KDKD…YAAF).

The protein belongs to the STN1 family. Component of the CST complex, composed of TEN1/C17orf106, CTC1/C17orf68 and STN1; in the complex interacts directly with TEN1 and CTC1. Interacts with ACD/TPP1. Interacts with POT1 and POLA1.

Its subcellular location is the nucleus. It is found in the chromosome. The protein localises to the telomere. Its function is as follows. Component of the CST complex proposed to act as a specialized replication factor promoting DNA replication under conditions of replication stress or natural replication barriers such as the telomere duplex. The CST complex binds single-stranded DNA with high affinity in a sequence-independent manner, while isolated subunits bind DNA with low affinity by themselves. Initially the CST complex has been proposed to protect telomeres from DNA degradation. However, the CST complex has been shown to be involved in several aspects of telomere replication. The CST complex inhibits telomerase and is involved in telomere length homeostasis; it is proposed to bind to newly telomerase-synthesized 3' overhangs and to terminate telomerase action implicating the association with the ACD:POT1 complex thus interfering with its telomerase stimulation activity. The CST complex is also proposed to be involved in fill-in synthesis of the telomeric C-strand probably implicating recruitment and activation of DNA polymerase alpha. The CST complex facilitates recovery from many forms of exogenous DNA damage; seems to be involved in the re-initiation of DNA replication at repaired forks and/or dormant origins. Required for efficicient replication of the duplex region of the telomere. Promotes efficient replication of lagging-strand telomeres. Promotes general replication start following replication-fork stalling implicating new origin firing. May be in involved in C-strand fill-in during late S/G2 phase independent of its role in telomere duplex replication. The chain is CST complex subunit STN1 from Mus musculus (Mouse).